A 151-amino-acid chain; its full sequence is FIS1-related protein fis-2 (151 aa).

A helical transmembrane segment spans residues 126-146 (LIGAAIVGGGALALAGLVAIF).

It belongs to the FIS1 family.

It localises to the mitochondrion outer membrane. The protein localises to the peroxisome membrane. The protein resides in the mitochondrion. In terms of biological role, involved in the fragmentation of the mitochondrial network. Involved in perinuclear clustering of the mitochondrial network. May act, redundantly with fis-1, downstream of mitochondrial fission, before the fission products participate in mitochondrial homeostasis, mitophagy, or apoptosis. Plays a role in apoptosis by promoting mitochondrial elimination and cell-death execution, acting downstream of caspase ced-3, and perhaps independently of dynamin GTPase drp-1, caspase ced-9 and apoptosis-inducing factor AIFM/wah-1. This Caenorhabditis elegans protein is FIS1-related protein fis-2.